We begin with the raw amino-acid sequence, 331 residues long: Heme A synthase (331 aa).

8 helical membrane passes run 6–26 (VAIWLFLCSLMVICMVGIGGF), 87–107 (YVHRLIARLTGLVFILPFIYF), 124–144 (ALLFGILQAFAGWYMVKSGLV), 154–174 (LALHLLLALVIFALLSYQFFD), 193–213 (IWIILILVTVQIIFGAFVAGL), 251–271 (VQFIHRALALLILVLTAILTI), 279–299 (LYVMLFSVIIQVILGIVTLLL), and 301–321 (IPMAIAIAHQMFSFILFGSGL). His-255 contacts heme. His-309 contacts heme.

This sequence belongs to the COX15/CtaA family. Type 2 subfamily. As to quaternary structure, interacts with CtaB. Heme b is required as a cofactor.

The protein resides in the cell membrane. The enzyme catalyses Fe(II)-heme o + 2 A + H2O = Fe(II)-heme a + 2 AH2. Its pathway is porphyrin-containing compound metabolism; heme A biosynthesis; heme A from heme O: step 1/1. Its function is as follows. Catalyzes the conversion of heme O to heme A by two successive hydroxylations of the methyl group at C8. The first hydroxylation forms heme I, the second hydroxylation results in an unstable dihydroxymethyl group, which spontaneously dehydrates, resulting in the formyl group of heme A. In Wolbachia pipientis subsp. Culex pipiens (strain wPip), this protein is Heme A synthase.